The primary structure comprises 590 residues: Proline--tRNA ligase (590 aa).

It belongs to the class-II aminoacyl-tRNA synthetase family. ProS type 1 subfamily. Homodimer.

It is found in the cytoplasm. It catalyses the reaction tRNA(Pro) + L-proline + ATP = L-prolyl-tRNA(Pro) + AMP + diphosphate. Its function is as follows. Catalyzes the attachment of proline to tRNA(Pro) in a two-step reaction: proline is first activated by ATP to form Pro-AMP and then transferred to the acceptor end of tRNA(Pro). As ProRS can inadvertently accommodate and process non-cognate amino acids such as alanine and cysteine, to avoid such errors it has two additional distinct editing activities against alanine. One activity is designated as 'pretransfer' editing and involves the tRNA(Pro)-independent hydrolysis of activated Ala-AMP. The other activity is designated 'posttransfer' editing and involves deacylation of mischarged Ala-tRNA(Pro). The misacylated Cys-tRNA(Pro) is not edited by ProRS. The polypeptide is Proline--tRNA ligase (Clavibacter sepedonicus (Clavibacter michiganensis subsp. sepedonicus)).